Reading from the N-terminus, the 379-residue chain is Cytochrome b (379 aa).

The next 4 helical transmembrane spans lie at 33 to 53, 77 to 98, 113 to 133, and 178 to 198; these read FGSL…FLAM, WLIR…FIHV, WNIG…GYVL, and FFAF…VHLL. Residues His83 and His97 each coordinate heme b. Heme b-binding residues include His182 and His196. His201 serves as a coordination point for a ubiquinone. Helical transmembrane passes span 226–246, 288–308, 320–340, and 347–367; these read TKDL…ALFF, LGGV…PLLN, VTQV…WIGG, and FTMI…ILIP.

Belongs to the cytochrome b family. The cytochrome bc1 complex contains 11 subunits: 3 respiratory subunits (MT-CYB, CYC1 and UQCRFS1), 2 core proteins (UQCRC1 and UQCRC2) and 6 low-molecular weight proteins (UQCRH/QCR6, UQCRB/QCR7, UQCRQ/QCR8, UQCR10/QCR9, UQCR11/QCR10 and a cleavage product of UQCRFS1). This cytochrome bc1 complex then forms a dimer. It depends on heme b as a cofactor.

Its subcellular location is the mitochondrion inner membrane. Its function is as follows. Component of the ubiquinol-cytochrome c reductase complex (complex III or cytochrome b-c1 complex) that is part of the mitochondrial respiratory chain. The b-c1 complex mediates electron transfer from ubiquinol to cytochrome c. Contributes to the generation of a proton gradient across the mitochondrial membrane that is then used for ATP synthesis. The polypeptide is Cytochrome b (MT-CYB) (Akodon lutescens puer (Altiplano grass mouse)).